A 177-amino-acid polypeptide reads, in one-letter code: Large ribosomal subunit protein uL6 (177 aa).

This sequence belongs to the universal ribosomal protein uL6 family. Part of the 50S ribosomal subunit.

Its function is as follows. This protein binds to the 23S rRNA, and is important in its secondary structure. It is located near the subunit interface in the base of the L7/L12 stalk, and near the tRNA binding site of the peptidyltransferase center. This is Large ribosomal subunit protein uL6 from Rhizobium leguminosarum bv. trifolii (strain WSM2304).